A 319-amino-acid chain; its full sequence is GTP 3',8-cyclase (319 aa).

The 224-residue stretch at 4–227 (KHGRKINYLR…VETEKSSTAL (224 aa)) folds into the Radical SAM core domain. Arg-13 serves as a coordination point for GTP. Residues Cys-20 and Cys-24 each contribute to the [4Fe-4S] cluster site. Residue Tyr-26 coordinates S-adenosyl-L-methionine. Cys-27 provides a ligand contact to [4Fe-4S] cluster. A GTP-binding site is contributed by Arg-63. Gly-67 provides a ligand contact to S-adenosyl-L-methionine. Thr-94 lines the GTP pocket. An S-adenosyl-L-methionine-binding site is contributed by Ser-118. Residue Lys-155 coordinates GTP. Met-189 lines the S-adenosyl-L-methionine pocket. Positions 249 and 252 each coordinate [4Fe-4S] cluster. 254–256 (RVR) contacts GTP. A [4Fe-4S] cluster-binding site is contributed by Cys-266.

It belongs to the radical SAM superfamily. MoaA family. Monomer and homodimer. It depends on [4Fe-4S] cluster as a cofactor.

The enzyme catalyses GTP + AH2 + S-adenosyl-L-methionine = (8S)-3',8-cyclo-7,8-dihydroguanosine 5'-triphosphate + 5'-deoxyadenosine + L-methionine + A + H(+). It functions in the pathway cofactor biosynthesis; molybdopterin biosynthesis. Its function is as follows. Catalyzes the cyclization of GTP to (8S)-3',8-cyclo-7,8-dihydroguanosine 5'-triphosphate. This Clostridium botulinum (strain ATCC 19397 / Type A) protein is GTP 3',8-cyclase.